Reading from the N-terminus, the 424-residue chain is Phosphomethylpyrimidine synthase (424 aa).

Substrate contacts are provided by residues M94, Y123, H162, S184–G186, N225–R228, and E264. Residue H268 coordinates Zn(2+). A substrate-binding site is contributed by Y291. H332 contacts Zn(2+). C406, C409, and C413 together coordinate [4Fe-4S] cluster.

It belongs to the ThiC family. The cofactor is [4Fe-4S] cluster.

The enzyme catalyses 5-amino-1-(5-phospho-beta-D-ribosyl)imidazole + S-adenosyl-L-methionine = 4-amino-2-methyl-5-(phosphooxymethyl)pyrimidine + CO + 5'-deoxyadenosine + formate + L-methionine + 3 H(+). It functions in the pathway cofactor biosynthesis; thiamine diphosphate biosynthesis. In terms of biological role, catalyzes the synthesis of the hydroxymethylpyrimidine phosphate (HMP-P) moiety of thiamine from aminoimidazole ribotide (AIR) in a radical S-adenosyl-L-methionine (SAM)-dependent reaction. The polypeptide is Phosphomethylpyrimidine synthase (Methanoculleus marisnigri (strain ATCC 35101 / DSM 1498 / JR1)).